Reading from the N-terminus, the 159-residue chain is Transcriptional repressor NrdR (159 aa).

A zinc finger spans residues 3 to 34 (CPFCGGVENKVMDSRVSRDGNAIRRRRECLAC). The 91-residue stretch at 49 to 139 (PTVVKKDGRR…VYRQFRDVND (91 aa)) folds into the ATP-cone domain.

This sequence belongs to the NrdR family. The cofactor is Zn(2+).

Functionally, negatively regulates transcription of bacterial ribonucleotide reductase nrd genes and operons by binding to NrdR-boxes. The polypeptide is Transcriptional repressor NrdR (Syntrophus aciditrophicus (strain SB)).